A 501-amino-acid chain; its full sequence is uncharacterized protein (501 aa).

2 disordered regions span residues Glu-179–Ala-404 and Ser-480–Asp-501. A compositionally biased stretch (basic and acidic residues) spans Ser-191–Arg-200. Residues Asp-201–Lys-214 are compositionally biased toward basic residues. Positions Lys-215 to Ile-226 are enriched in basic and acidic residues. Positions Ser-231–Thr-274 are enriched in low complexity. The segment covering Asn-304–Ser-316 has biased composition (basic and acidic residues). Residues Asp-333–Asp-352 show a composition bias toward polar residues. Residues Glu-379–Thr-403 are compositionally biased toward acidic residues.

This is an uncharacterized protein from Acanthamoeba polyphaga mimivirus (APMV).